A 352-amino-acid chain; its full sequence is Staphylococcal superantigen-like 3 (352 aa).

Residues 1 to 30 (MKMRTIAKTSLALGLLTTGAITVTTQSVKA) form the signal peptide. A disordered region spans residues 61–165 (ATTQAANTRQ…TIKQAQTDMT (105 aa)). Basic and acidic residues predominate over residues 69-104 (RQERTPKLEKAPNTNEEKTSASKIEKISQPKQEEQK). A compositionally biased stretch (low complexity) spans 114-141 (PKQEQSQTTTESTTPKTKVTTPPSTNTP). Over residues 142–164 (QPMQSTKSDTPQSPTIKQAQTDM) the composition is skewed to polar residues. Positions 228–326 (IDVFIVLEDN…VIKMKNGGKY (99 aa)) are sialyl Lewis X-binding.

The protein belongs to the staphylococcal/streptococcal toxin family. In terms of assembly, interacts with host TLR2 (via its extracellular domain).

Its subcellular location is the secreted. Its function is as follows. Secreted protein that plays an essential role in immune innate response inhibition by interacting with and inhibiting host TLR2. In turn, bacteria recognition by immune cells is impaired and cytokine production is inhibited. Mechanistically, by interacting with TLR2, blocks ligand binding and thus inhibits activation. Second, by interacting with an already formed TLR2-lipopeptide complex, prevents TLR heterodimerization and downstream signaling. The interaction with host TLR2 does not involve sialyl Lewis X interactions. This chain is Staphylococcal superantigen-like 3, found in Staphylococcus aureus (strain Newman).